We begin with the raw amino-acid sequence, 391 residues long: Acetate kinase (391 aa).

Asparagine 7 serves as a coordination point for Mg(2+). Lysine 14 is an ATP binding site. A substrate-binding site is contributed by arginine 88. The active-site Proton donor/acceptor is the aspartate 145. Residues 203–207 (HAGNG), 278–280 (DAR), and 326–330 (GMGEN) each bind ATP. Residue glutamate 378 participates in Mg(2+) binding.

This sequence belongs to the acetokinase family. As to quaternary structure, homodimer. The cofactor is Mg(2+). Mn(2+) is required as a cofactor.

It localises to the cytoplasm. It catalyses the reaction acetate + ATP = acetyl phosphate + ADP. It functions in the pathway metabolic intermediate biosynthesis; acetyl-CoA biosynthesis; acetyl-CoA from acetate: step 1/2. Catalyzes the formation of acetyl phosphate from acetate and ATP. Can also catalyze the reverse reaction. This chain is Acetate kinase, found in Phytoplasma mali (strain AT).